Reading from the N-terminus, the 264-residue chain is Astacin-like metalloprotease toxin 1 (264 aa).

The first 16 residues, 1–16, serve as a signal peptide directing secretion; sequence MIKYIGVFAFLVGGFC. Positions 17–51 are excised as a propeptide; it reads HDFETVISNQDPIVDGMRLVEGDMLFDDGPLFTER. Positions 52-249 constitute a Peptidase M12A domain; sequence NAVKYDQQLW…VKVNKLYKCP (198 aa). Intrachain disulfides connect Cys-93–Cys-248 and Cys-114–Cys-135. A Zn(2+)-binding site is contributed by His-143. Residue Glu-144 is part of the active site. 2 residues coordinate Zn(2+): His-147 and His-153. 2 N-linked (GlcNAc...) asparagine glycosylation sites follow: Asn-173 and Asn-185.

As to quaternary structure, monomer. The cofactor is Zn(2+). In terms of tissue distribution, expressed by the venom gland.

The protein localises to the secreted. With respect to regulation, inhibited by 1,10-phenanthroline. In terms of biological role, zinc metalloprotease. Provoques deadhesion of endothelial cells from cell cultures, and also degradation of fibronectin, fibrinogen and gelatin in vitro. Its role in the venom is not fully understood but it might act as a spreading factor that facilitates diffusion of other venom toxins. Alternatively, it might be involved in the proteolytic processing of other venom toxins or it might play a role in extra-oral digestion of prey. This is Astacin-like metalloprotease toxin 1 from Loxosceles intermedia (Brown spider).